A 490-amino-acid polypeptide reads, in one-letter code: Cysteine--tRNA ligase (490 aa).

A Zn(2+)-binding site is contributed by C36. The 'HIGH' region signature appears at 38 to 48 (VTVYDYSHIGH). C216, H241, and E245 together coordinate Zn(2+). A 'KMSKS' region motif is present at residues 278-282 (KMSKS). K281 is an ATP binding site.

The protein belongs to the class-I aminoacyl-tRNA synthetase family. As to quaternary structure, monomer. The cofactor is Zn(2+).

It localises to the cytoplasm. It carries out the reaction tRNA(Cys) + L-cysteine + ATP = L-cysteinyl-tRNA(Cys) + AMP + diphosphate. The protein is Cysteine--tRNA ligase of Magnetococcus marinus (strain ATCC BAA-1437 / JCM 17883 / MC-1).